Reading from the N-terminus, the 232-residue chain is 2-C-methyl-D-erythritol 4-phosphate cytidylyltransferase (232 aa).

It belongs to the IspD/TarI cytidylyltransferase family. IspD subfamily.

The catalysed reaction is 2-C-methyl-D-erythritol 4-phosphate + CTP + H(+) = 4-CDP-2-C-methyl-D-erythritol + diphosphate. Its pathway is isoprenoid biosynthesis; isopentenyl diphosphate biosynthesis via DXP pathway; isopentenyl diphosphate from 1-deoxy-D-xylulose 5-phosphate: step 2/6. Its function is as follows. Catalyzes the formation of 4-diphosphocytidyl-2-C-methyl-D-erythritol from CTP and 2-C-methyl-D-erythritol 4-phosphate (MEP). The chain is 2-C-methyl-D-erythritol 4-phosphate cytidylyltransferase from Synechococcus elongatus (strain ATCC 33912 / PCC 7942 / FACHB-805) (Anacystis nidulans R2).